Consider the following 444-residue polypeptide: Glutamate--tRNA ligase 1 (444 aa).

A 'HIGH' region motif is present at residues 7-17; it reads PSPTGYLHVGN. The 'KMSKS' region signature appears at 238 to 242; it reads KISKR. Lysine 241 contacts ATP.

It belongs to the class-I aminoacyl-tRNA synthetase family. Glutamate--tRNA ligase type 1 subfamily. Monomer.

The protein resides in the cytoplasm. The enzyme catalyses tRNA(Glu) + L-glutamate + ATP = L-glutamyl-tRNA(Glu) + AMP + diphosphate. Catalyzes the attachment of glutamate to tRNA(Glu) in a two-step reaction: glutamate is first activated by ATP to form Glu-AMP and then transferred to the acceptor end of tRNA(Glu). This chain is Glutamate--tRNA ligase 1, found in Wolbachia pipientis subsp. Culex pipiens (strain wPip).